The chain runs to 70 residues: Putative defensin-like protein 280 (70 aa).

Positions 1–23 (MASIKHFFLVFICVSVLLTSGLA) are cleaved as a signal peptide. Disulfide bonds link C30-C53, C39-C65, and C43-C67.

Belongs to the DEFL family.

Its subcellular location is the secreted. This Arabidopsis thaliana (Mouse-ear cress) protein is Putative defensin-like protein 280.